A 267-amino-acid chain; its full sequence is Shikimate dehydrogenase (NADP(+)) (267 aa).

Shikimate contacts are provided by residues 14-16 (SLS) and Thr-61. Lys-65 functions as the Proton acceptor in the catalytic mechanism. Positions 86 and 101 each coordinate shikimate. Residues 126–130 (GAGGA), 150–155 (NRTPFK), and Leu-213 each bind NADP(+). Tyr-215 is a binding site for shikimate. Position 236 (Gly-236) interacts with NADP(+).

It belongs to the shikimate dehydrogenase family. Homodimer.

The enzyme catalyses shikimate + NADP(+) = 3-dehydroshikimate + NADPH + H(+). It participates in metabolic intermediate biosynthesis; chorismate biosynthesis; chorismate from D-erythrose 4-phosphate and phosphoenolpyruvate: step 4/7. In terms of biological role, involved in the biosynthesis of the chorismate, which leads to the biosynthesis of aromatic amino acids. Catalyzes the reversible NADPH linked reduction of 3-dehydroshikimate (DHSA) to yield shikimate (SA). The sequence is that of Shikimate dehydrogenase (NADP(+)) from Ruthia magnifica subsp. Calyptogena magnifica.